A 207-amino-acid chain; its full sequence is Large ribosomal subunit protein uL4 (207 aa).

The disordered stretch occupies residues glutamine 44–isoleucine 78. The span at glycine 47 to glycine 59 shows a compositional bias: basic and acidic residues. Residues glycine 60–glycine 71 are compositionally biased toward basic residues.

Belongs to the universal ribosomal protein uL4 family. As to quaternary structure, part of the 50S ribosomal subunit.

Its function is as follows. One of the primary rRNA binding proteins, this protein initially binds near the 5'-end of the 23S rRNA. It is important during the early stages of 50S assembly. It makes multiple contacts with different domains of the 23S rRNA in the assembled 50S subunit and ribosome. In terms of biological role, forms part of the polypeptide exit tunnel. The chain is Large ribosomal subunit protein uL4 from Brevibacillus brevis (strain 47 / JCM 6285 / NBRC 100599).